We begin with the raw amino-acid sequence, 151 residues long: Protein SprT-like (151 aa).

Residues 7 to 147 (QKLTESISES…GKCKGKLHLH (141 aa)) form the SprT-like domain. Residue H67 coordinates Zn(2+). The active site involves E68. H71 provides a ligand contact to Zn(2+).

It belongs to the SprT family. Zn(2+) is required as a cofactor.

The protein resides in the cytoplasm. The chain is Protein SprT-like from Staphylococcus carnosus (strain TM300).